Reading from the N-terminus, the 862-residue chain is uncharacterized protein (862 aa).

Disordered stretches follow at residues 45-91, 633-824, and 837-862; these read HPPV…PDEV, RAEQ…GDDD, and GGSG…LLLS. 2 stretches are compositionally biased toward acidic residues: residues 57–69 and 78–91; these read MDVD…EKDE and PEVE…PDEV. 3 stretches are compositionally biased toward basic and acidic residues: residues 633–650, 657–686, and 694–703; these read RAEQ…DAAK, REAE…KAEK, and TKKEKTEKKT. Basic residues predominate over residues 751-760; sequence EKKKRTAAKK. Residues 761 to 779 show a composition bias toward basic and acidic residues; sequence KTVDRPSGHRPSSKKEYRS.

This is an uncharacterized protein from Ictaluridae (bullhead catfishes).